Here is a 347-residue protein sequence, read N- to C-terminus: Protein RecA (347 aa).

68-75 is a binding site for ATP; it reads GPESSGKT.

It belongs to the RecA family.

The protein localises to the cytoplasm. Can catalyze the hydrolysis of ATP in the presence of single-stranded DNA, the ATP-dependent uptake of single-stranded DNA by duplex DNA, and the ATP-dependent hybridization of homologous single-stranded DNAs. It interacts with LexA causing its activation and leading to its autocatalytic cleavage. This chain is Protein RecA, found in Mycobacterium sp. (strain JLS).